We begin with the raw amino-acid sequence, 714 residues long: P-loop NTPase domain-containing protein LPA1 (714 aa).

Residues 1-11 (MPMPPQCASSK) show a composition bias toward low complexity. Disordered stretches follow at residues 1 to 42 (MPMP…PPPK), 259 to 293 (QKLDIVSHPNTNEGRDDTSDDKAHHGSSELPPRTE), and 595 to 689 (FGSE…GSGN). Residues 271–285 (EGRDDTSDDKAHHGS) show a composition bias toward basic and acidic residues. Residues 595–617 (FGSEEDADDPPDAGTDEDLTDEE) show a composition bias toward acidic residues. Residues 618–636 (RDMHEIEAGSVDEHSTKSD) show a composition bias toward basic and acidic residues. The segment covering 659–670 (AASSTKNSSNQE) has biased composition (polar residues).

As to expression, expressed in roots, leaf blade shoots, leaf sheath shoots and panicles.

In terms of biological role, required for the accumulation of phytic acid in seeds. Phytic acid is the primary storage form of phosphorus in cereal grains and other plant seeds. The protein is P-loop NTPase domain-containing protein LPA1 of Oryza sativa subsp. japonica (Rice).